We begin with the raw amino-acid sequence, 179 residues long: Fas apoptotic inhibitory molecule 1 (179 aa).

An N-acetylthreonine modification is found at T2.

This sequence belongs to the FAIM1 family. As to expression, widely expressed, with the highest levels in brain, thymus, kidney, and spleen.

The protein localises to the cytoplasm. Plays a role as an inducible effector molecule that mediates Fas resistance produced by surface Ig engagement in B cells. This chain is Fas apoptotic inhibitory molecule 1 (Faim), found in Mus musculus (Mouse).